Reading from the N-terminus, the 341-residue chain is Ribosomal RNA small subunit methyltransferase H (341 aa).

Residues 47–49, Asp-64, Phe-91, Asp-109, and Gln-116 contribute to the S-adenosyl-L-methionine site; that span reads GGY.

The protein belongs to the methyltransferase superfamily. RsmH family.

It localises to the cytoplasm. It carries out the reaction cytidine(1402) in 16S rRNA + S-adenosyl-L-methionine = N(4)-methylcytidine(1402) in 16S rRNA + S-adenosyl-L-homocysteine + H(+). Specifically methylates the N4 position of cytidine in position 1402 (C1402) of 16S rRNA. This is Ribosomal RNA small subunit methyltransferase H from Rhizobium rhizogenes (strain K84 / ATCC BAA-868) (Agrobacterium radiobacter).